A 286-amino-acid polypeptide reads, in one-letter code: 3-amino-tetrahydro-pyrrolizinone reductase (286 aa).

Tyr-146 (proton acceptor) is an active-site residue.

The protein belongs to the short-chain dehydrogenases/reductases (SDR) family.

The enzyme catalyses 3-amino-5,6,7,7a-tetrahydro-1H-pyrrolizin-1-one + AH2 = 3-amino-tetrahydro-1H-pyrrolizin-1-ol + A. Functionally, involved in the biosynthetic pathway of pyrrolizwilline, a pyrrolizidine alkaloid. Catalyzes the reduction of 3-amino-tetrahydro-pyrrolizinone to 3-amino-tetrahydro-pyrrolizinol. In Xenorhabdus hominickii, this protein is 3-amino-tetrahydro-pyrrolizinone reductase (xhpD).